The primary structure comprises 567 residues: Mitogen-activated protein kinase 16 (567 aa).

One can recognise a Protein kinase domain in the interval 25–316; sequence YRIEEVIGKG…AEEALADVYF (292 aa). ATP-binding positions include 31 to 39 and lysine 54; that span reads IGKGSYGVV. Aspartate 151 serves as the catalytic Proton acceptor. Threonine 187 bears the Phosphothreonine mark. A TXY motif is present at residues 187–189; it reads TDY. Tyrosine 189 is subject to Phosphotyrosine. Threonine 192 carries the phosphothreonine modification. 2 disordered regions span residues 428–455 and 512–567; these read AQQS…ADRN and PAAA…SRWY. The segment covering 443–453 has biased composition (basic and acidic residues); the sequence is SIRDERPRGAD. The span at 545–567 shows a compositional bias: polar residues; that stretch reads KPNTQYIPQKVSAAQDTAMSRWY.

This sequence belongs to the protein kinase superfamily. CMGC Ser/Thr protein kinase family. MAP kinase subfamily. In terms of processing, dually phosphorylated on Thr-187 and Tyr-189, which activates the enzyme.

It carries out the reaction L-seryl-[protein] + ATP = O-phospho-L-seryl-[protein] + ADP + H(+). The catalysed reaction is L-threonyl-[protein] + ATP = O-phospho-L-threonyl-[protein] + ADP + H(+). With respect to regulation, activated by threonine and tyrosine phosphorylation. The protein is Mitogen-activated protein kinase 16 (MPK16) of Arabidopsis thaliana (Mouse-ear cress).